The primary structure comprises 102 residues: Small ribosomal subunit protein uS10 (102 aa).

The protein belongs to the universal ribosomal protein uS10 family. Part of the 30S ribosomal subunit.

Involved in the binding of tRNA to the ribosomes. The protein is Small ribosomal subunit protein uS10 of Streptococcus mutans serotype c (strain ATCC 700610 / UA159).